Reading from the N-terminus, the 66-residue chain is Neurotoxin BmK AGP-SYPU1 (66 aa).

Residues 2-64 (RDAYIAQNYN…KPIRIPGKCH (63 aa)) enclose the LCN-type CS-alpha/beta domain. Cystine bridges form between Cys12–Cys63, Cys16–Cys36, Cys22–Cys46, and Cys26–Cys48. A propeptide spans 65-66 (RR) (removed by a carboxypeptidase).

As to expression, expressed by the venom gland.

Its subcellular location is the secreted. Its function is as follows. Alpha toxins bind voltage-independently at site-3 of sodium channels (Nav) and inhibit the inactivation of the activated channels, thereby blocking neuronal transmission. This toxin has a strong analgesic effect when administered to mice by intraperitoneal injection. The chain is Neurotoxin BmK AGP-SYPU1 from Olivierus martensii (Manchurian scorpion).